Here is a 380-residue protein sequence, read N- to C-terminus: Bifunctional dihydropteroate synthase/dihydropteroate reductase (380 aa).

The tract at residues 1 to 104 (MIVKRLNPDA…SQPFGLKHLA (104 aa)) is dihydropteroate reductase. Residues 105–380 (QELKSHLKAP…KVFKSLEETD (276 aa)) are dihydropteroate synthase. Positions 119–371 (PQIMAVLNLT…DIDEHIDLIK (253 aa)) constitute a Pterin-binding domain. Mg(2+) is bound at residue asparagine 126. (7,8-dihydropterin-6-yl)methyl diphosphate-binding positions include aspartate 202, asparagine 221, aspartate 289, lysine 325, and 359–361 (RVH).

The protein in the C-terminal section; belongs to the DHPS family. The cofactor is FAD. Requires FMN as cofactor. It depends on Mg(2+) as a cofactor.

The catalysed reaction is (7,8-dihydropterin-6-yl)methyl diphosphate + 4-aminobenzoate = 7,8-dihydropteroate + diphosphate. It carries out the reaction (6S)-5,6,7,8-tetrahydropteroate + NAD(+) = 7,8-dihydropteroate + NADH + H(+). It participates in cofactor biosynthesis; tetrahydrofolate biosynthesis; 7,8-dihydrofolate from 2-amino-4-hydroxy-6-hydroxymethyl-7,8-dihydropteridine diphosphate and 4-aminobenzoate: step 1/2. Its function is as follows. Bifunctional enzyme that catalyzes the formation of dihydropteroate, the immediate precursor of folic acid and the reduction of dihydropteroate to tetrahydropteroate. The sequence is that of Bifunctional dihydropteroate synthase/dihydropteroate reductase from Helicobacter pylori (strain ATCC 700392 / 26695) (Campylobacter pylori).